Here is a 275-residue protein sequence, read N- to C-terminus: MESLLTLPLAGEARVRILQITDTHLFAQKHEALLGVNTWESYQAVLEAIRPHQHEFDLIVATGDLAQDQSSAAYQHFAEGIASFRAPCVWLPGNHDFQPAMYSALQDAGISPAKRVFIGEQWQILLLDSQVFGVPHGELSEFQLEWLERKLADAPERHTLLLLHHHPLPAGCSWLDQHSLRNAGELDTVLAKFPHVKYLLCGHIHQELDLDWNGRRLLATPSTCVQFKPHCSNFTLDTIAPGWRTLELHADGTLTTEVHRLADTRFQPDTASEGY.

Positions 22, 24, 64, 94, 164, 203, and 205 each coordinate Fe cation. AMP contacts are provided by residues histidine 24, aspartate 64, and 94–95 (NH). An AMP-binding site is contributed by histidine 205.

The protein belongs to the cyclic nucleotide phosphodiesterase class-III family. Fe(2+) serves as cofactor.

It carries out the reaction 3',5'-cyclic AMP + H2O = AMP + H(+). In terms of biological role, hydrolyzes cAMP to 5'-AMP. Plays an important regulatory role in modulating the intracellular concentration of cAMP, thereby influencing cAMP-dependent processes. The polypeptide is 3',5'-cyclic adenosine monophosphate phosphodiesterase CpdA (Escherichia coli O157:H7).